A 467-amino-acid chain; its full sequence is ATP synthase subunit beta (467 aa).

156 to 163 (GGAGVGKT) lines the ATP pocket.

The protein belongs to the ATPase alpha/beta chains family. F-type ATPases have 2 components, CF(1) - the catalytic core - and CF(0) - the membrane proton channel. CF(1) has five subunits: alpha(3), beta(3), gamma(1), delta(1), epsilon(1). CF(0) has three main subunits: a(1), b(2) and c(9-12). The alpha and beta chains form an alternating ring which encloses part of the gamma chain. CF(1) is attached to CF(0) by a central stalk formed by the gamma and epsilon chains, while a peripheral stalk is formed by the delta and b chains.

The protein resides in the cell inner membrane. The enzyme catalyses ATP + H2O + 4 H(+)(in) = ADP + phosphate + 5 H(+)(out). Produces ATP from ADP in the presence of a proton gradient across the membrane. The catalytic sites are hosted primarily by the beta subunits. The sequence is that of ATP synthase subunit beta from Cupriavidus metallidurans (strain ATCC 43123 / DSM 2839 / NBRC 102507 / CH34) (Ralstonia metallidurans).